We begin with the raw amino-acid sequence, 281 residues long: Phosphoglycerate mutase-like protein AT74H (281 aa).

H17 (tele-phosphohistidine intermediate) is an active-site residue. E109 acts as the Proton donor/acceptor in catalysis.

This sequence belongs to the phosphoglycerate mutase family.

Functionally, may play a role in carbohydrates metabolism. This Arabidopsis thaliana (Mouse-ear cress) protein is Phosphoglycerate mutase-like protein AT74H.